The chain runs to 296 residues: Large ribosomal subunit protein uL15m (296 aa).

The N-terminal 20 residues, 1-20 (MAASGGSGGKATELLRCLPR), are a transit peptide targeting the mitochondrion. Positions 25 to 66 (NLRPNPGARHREKRRGRGIHGGRKSGRGHKGETQRGNQPRLG) are disordered. Residues 32 to 52 (ARHREKRRGRGIHGGRKSGRG) show a composition bias toward basic residues.

The protein belongs to the universal ribosomal protein uL15 family. In terms of assembly, component of the mitochondrial ribosome large subunit (39S) which comprises a 16S rRNA and about 50 distinct proteins.

Its subcellular location is the mitochondrion. The polypeptide is Large ribosomal subunit protein uL15m (mrpl15) (Xenopus laevis (African clawed frog)).